Here is a 536-residue protein sequence, read N- to C-terminus: Xylulose kinase (536 aa).

Substrate contacts are provided by histidine 99, arginine 170, aspartate 280, and asparagine 281. Residues tryptophan 355, 441–442 (GA), and asparagine 445 contribute to the ATP site.

It belongs to the FGGY kinase family. As to quaternary structure, monomer.

It catalyses the reaction D-xylulose + ATP = D-xylulose 5-phosphate + ADP + H(+). Its function is as follows. Phosphorylates D-xylulose to produce D-xylulose 5-phosphate, a molecule that may play an important role in the regulation of glucose metabolism and lipogenesis. This is Xylulose kinase (XYLB) from Homo sapiens (Human).